The primary structure comprises 151 residues: UPF0735 ACT domain-containing protein SAUSA300_1599 (151 aa).

Residues 74-149 (TLILYVTDIV…YVSKVELISM (76 aa)) enclose the ACT domain.

This sequence belongs to the UPF0735 family.

In Staphylococcus aureus (strain USA300), this protein is UPF0735 ACT domain-containing protein SAUSA300_1599.